The chain runs to 417 residues: Carboxypeptidase A2 (417 aa).

The signal sequence occupies residues 1–16; sequence MRLTLLLAALLGYIYC. Residues 17–112 constitute a propeptide, activation peptide; it reads QETFVGDQVL…EMLFNQQRER (96 aa). Positions 120 to 412 constitute a Peptidase M14 domain; it reads AYHTLEEIYQ…LGLKTIMEHV (293 aa). Zn(2+) is bound by residues His177 and Glu180. Substrate is bound by residues 177–180, Arg235, and 252–253; these read HARE and NR. Cys246 and Cys269 are disulfide-bonded. Residue His304 participates in Zn(2+) binding. Substrate is bound at residue 305–306; sequence SY. A disulfide bridge links Cys318 with Cys352. Tyr356 contributes to the substrate binding site. The active-site Proton donor/acceptor is the Glu378.

The protein belongs to the peptidase M14 family. Requires Zn(2+) as cofactor.

The protein localises to the secreted. It catalyses the reaction Similar to that of carboxypeptidase A (EC 3.4.17.1), but with a preference for bulkier C-terminal residues.. In terms of biological role, carboxypeptidase that catalyzes the release of a C-terminal amino acid, with a preference for large aromatic C-terminal residues. This Rattus norvegicus (Rat) protein is Carboxypeptidase A2 (Cpa2).